The primary structure comprises 387 residues: F-box/LRR-repeat/kelch-repeat protein At2g29770 (387 aa).

The segment at 1-34 is disordered; it reads MVFISETSDDGSNGGDPTKNPQEEEEENLPPIPQ. An F-box domain is found at 31 to 78; sequence PIPQGIPDELIESTVLLIRRCHYPTLSLLSKTFRRVISSSELYKSRFI. One copy of the LRR 1 repeat lies at 105–128; the sequence is CNIPRNISLHLREIKSLPPLNHGS. 2 Kelch repeats span residues 136–183 and 184–231; these read HMYV…VIDG and RIYV…FVTS. Residues 196–219 form an LRR 2 repeat; the sequence is DHWIEVFDIENRIWSSVPHHRYCN.

The sequence is that of F-box/LRR-repeat/kelch-repeat protein At2g29770 from Arabidopsis thaliana (Mouse-ear cress).